Reading from the N-terminus, the 877-residue chain is MNEKYAALRANVGMLGQLLGKSIKDHQGQAFLDKIETIRQLAKSSRKGNETDRERLLDTLRNLSDDELLPVARAFSQFLNLANVAEQFHTISRRCEEQVCTPDPLEQMFDKLKASNLSQEAIIQAVRELDIDLVLTAHPTEVTRRTLIHKHVQLNDCLEALELSDLLPRERDKILNRIEQLVNQAWHTNEIREQRPTPVDEAKWGFAVVENSLWPAIPEFMRNLDERLQHHLGVRLPLDAAPVKFTSWMGGDRDGNPFVTAKVTAEVLELGRWMAVSLFYKDIKELTSELSMSDCTDAVRERVGDHPEPYRALVRELREQLRETQEFLTAKVQGQASESRDLVKTTAQLREPLELCYHSLHACGMGNIADGMLLDVLRKLACFGIHLVKLDIRQDGERHGQVFSELTRYLGMGDYAEWSEDDKQAFLLNELNSRRPLIPTDWEPSDETRETLDTCKVIAQHDPDAFGIYIISMAGAPSDVLAVQLLLKEAGCKFRMPVAPLFETQEDLMAGTAVMERLLSVDWYRGYIQGRQYVMIGYSDSAKDAGMMAAGWAQYAAMESLVALAEANNLRLTLFHGRGGTVGRGGAPAHQAILSQPPGSLRGGLRVTEQGEMIRFKFGLPKVAIQSLNLYTSAVLEGNLLPPPKPKECWRAVMEQLASVSCDHYRSIVRGHPDFVPYFRAATPEMELGKLPLGSRPSKRKPNGGVESLRAIPWIFAWTQNRLMLPAWLGAHKGLQQAIADGQKGVLEEMSRQWPFFRTRLEMLEMVFLKADVWLAEYYDTRLVPKELWGLGKQLRQELADSIQVVLELRPQGDLLDDQPWIKESIKLRNPYTDPLNVLQVELLGRSRNHAETLHPELDQALMVTIAGIAAGMRNTG.

Active-site residues include H138 and K543.

Belongs to the PEPCase type 1 family. It depends on Mg(2+) as a cofactor.

The enzyme catalyses oxaloacetate + phosphate = phosphoenolpyruvate + hydrogencarbonate. In terms of biological role, forms oxaloacetate, a four-carbon dicarboxylic acid source for the tricarboxylic acid cycle. This is Phosphoenolpyruvate carboxylase from Aeromonas hydrophila subsp. hydrophila (strain ATCC 7966 / DSM 30187 / BCRC 13018 / CCUG 14551 / JCM 1027 / KCTC 2358 / NCIMB 9240 / NCTC 8049).